The sequence spans 152 residues: Adenosine 5'-monophosphoramidase HNT1 (152 aa).

Residues 8–119 enclose the HIT domain; the sequence is IFCKIIKGEI…IPKKDEATGL (112 aa). Residues 33 to 34, asparagine 93, 99 to 101, and 106 to 108 contribute to the AMP site; these read DI, HQV, and HFH. A Histidine triad motif motif is present at residues 104-108; sequence HVHFH. Catalysis depends on histidine 106, which acts as the Tele-AMP-histidine intermediate.

Belongs to the HINT family. Homodimer. It depends on Mg(2+) as a cofactor.

The catalysed reaction is adenosine 5'-phosphoramidate + H2O = AMP + NH4(+). Hydrolyzes adenosine 5'-monophosphoramidate substrates such as AMP-morpholidate, AMP-N-alanine methyl ester, AMP-alpha-acetyl lysine methyl ester and AMP-NH2. This chain is Adenosine 5'-monophosphoramidase HNT1, found in Candida albicans (strain SC5314 / ATCC MYA-2876) (Yeast).